We begin with the raw amino-acid sequence, 328 residues long: Putative UDP-N-acetylglucosamine--dolichyl-phosphate N-acetylglucosaminephosphotransferase (328 aa).

A run of 9 helical transmembrane segments spans residues 1–21 (MLVS…VTLI), 48–68 (VPVL…FTFL), 78–98 (IENV…LGLL), 107–127 (ATRA…SVGH), 129–149 (IISI…IIIL), 166–186 (LNGL…YIGL), 192–212 (SFYA…FLIF), 228–248 (FIGS…ALFF), and 301–321 (YHIV…AVVF).

It belongs to the glycosyltransferase 4 family.

The protein localises to the cell membrane. The catalysed reaction is a di-trans,poly-cis-dolichyl phosphate + UDP-N-acetyl-alpha-D-glucosamine = an N-acetyl-alpha-D-glucosaminyl-diphospho-di-trans,poly-cis-dolichol + UMP. Inhibited by tunicamycin. In Sulfolobus acidocaldarius (strain ATCC 33909 / DSM 639 / JCM 8929 / NBRC 15157 / NCIMB 11770), this protein is Putative UDP-N-acetylglucosamine--dolichyl-phosphate N-acetylglucosaminephosphotransferase (gnpTA).